We begin with the raw amino-acid sequence, 180 residues long: Large ribosomal subunit protein uL5 (180 aa).

This sequence belongs to the universal ribosomal protein uL5 family. Part of the 50S ribosomal subunit; part of the 5S rRNA/L5/L18/L25 subcomplex. Contacts the 5S rRNA and the P site tRNA. Forms a bridge to the 30S subunit in the 70S ribosome.

Functionally, this is one of the proteins that bind and probably mediate the attachment of the 5S RNA into the large ribosomal subunit, where it forms part of the central protuberance. In the 70S ribosome it contacts protein S13 of the 30S subunit (bridge B1b), connecting the 2 subunits; this bridge is implicated in subunit movement. Contacts the P site tRNA; the 5S rRNA and some of its associated proteins might help stabilize positioning of ribosome-bound tRNAs. The chain is Large ribosomal subunit protein uL5 from Ralstonia pickettii (strain 12J).